The primary structure comprises 249 residues: Transmembrane protein 150C (249 aa).

Topologically, residues methionine 1–tryptophan 9 are cytoplasmic. A helical transmembrane segment spans residues methionine 10–isoleucine 30. At alanine 31–alanine 64 the chain is on the extracellular side. A helical transmembrane segment spans residues serine 65 to leucine 85. At arginine 86 to proline 97 the chain is on the cytoplasmic side. A helical membrane pass occupies residues tryptophan 98–glycine 118. The Extracellular segment spans residues asparagine 119–asparagine 130. A helical transmembrane segment spans residues valine 131–threonine 151. Over leucine 152 to valine 168 the chain is Cytoplasmic. Residues isoleucine 169–isoleucine 189 traverse the membrane as a helical segment. Over histidine 190 to tyrosine 192 the chain is Extracellular. Residues alanine 193–valine 213 form a helical membrane-spanning segment. The Cytoplasmic segment spans residues glutamate 214–valine 249.

This sequence belongs to the DRAM/TMEM150 family.

It localises to the cell membrane. Its subcellular location is the lysosome membrane. The catalysed reaction is Ca(2+)(in) = Ca(2+)(out). The enzyme catalyses Na(+)(in) = Na(+)(out). It catalyses the reaction K(+)(in) = K(+)(out). It carries out the reaction Mg(2+)(in) = Mg(2+)(out). In terms of biological role, nonselective cationic channel with high permeability to Ca(2+). Component of a mechanosensitive cation channel. Confers mechanically activated (MA) currents with slow inactivation kinetics. May contribute to proprioception. The protein is Transmembrane protein 150C (Tmem150c) of Rattus norvegicus (Rat).